Here is a 99-residue protein sequence, read N- to C-terminus: Large ribosomal subunit protein eL21 (99 aa).

This sequence belongs to the eukaryotic ribosomal protein eL21 family.

The protein is Large ribosomal subunit protein eL21 of Ignicoccus hospitalis (strain KIN4/I / DSM 18386 / JCM 14125).